The sequence spans 121 residues: Large ribosomal subunit protein uL14 (121 aa).

This sequence belongs to the universal ribosomal protein uL14 family. Part of the 50S ribosomal subunit. Forms a cluster with proteins L3 and L19. In the 70S ribosome, L14 and L19 interact and together make contacts with the 16S rRNA in bridges B5 and B8.

Functionally, binds to 23S rRNA. Forms part of two intersubunit bridges in the 70S ribosome. This Porphyromonas gingivalis (strain ATCC 33277 / DSM 20709 / CIP 103683 / JCM 12257 / NCTC 11834 / 2561) protein is Large ribosomal subunit protein uL14.